A 247-amino-acid polypeptide reads, in one-letter code: 2,3-bisphosphoglycerate-dependent phosphoglycerate mutase (247 aa).

Residues 8–15, 21–22, Arg60, 87–90, Lys98, 114–115, and 183–184 contribute to the substrate site; these read RHGESVWN, TG, ERHY, RR, and GN. His9 functions as the Tele-phosphohistidine intermediate in the catalytic mechanism. Glu87 acts as the Proton donor/acceptor in catalysis.

This sequence belongs to the phosphoglycerate mutase family. BPG-dependent PGAM subfamily. As to quaternary structure, homodimer.

The catalysed reaction is (2R)-2-phosphoglycerate = (2R)-3-phosphoglycerate. It participates in carbohydrate degradation; glycolysis; pyruvate from D-glyceraldehyde 3-phosphate: step 3/5. Catalyzes the interconversion of 2-phosphoglycerate and 3-phosphoglycerate. The sequence is that of 2,3-bisphosphoglycerate-dependent phosphoglycerate mutase from Geobacter metallireducens (strain ATCC 53774 / DSM 7210 / GS-15).